We begin with the raw amino-acid sequence, 105 residues long: uncharacterized protein (105 aa).

Residues 1-27 (MSLKSWHPQSKTKRVGASEGNPQWGSG) form a disordered region.

This is an uncharacterized protein from Homo sapiens (Human).